The following is a 761-amino-acid chain: Xaa-Pro dipeptidyl-peptidase (761 aa).

Catalysis depends on charge relay system residues S349, D469, and H499.

This sequence belongs to the peptidase S15 family. In terms of assembly, homodimer.

It localises to the cytoplasm. It catalyses the reaction Hydrolyzes Xaa-Pro-|- bonds to release unblocked, N-terminal dipeptides from substrates including Ala-Pro-|-p-nitroanilide and (sequentially) Tyr-Pro-|-Phe-Pro-|-Gly-Pro-|-Ile.. Its function is as follows. Removes N-terminal dipeptides sequentially from polypeptides having unsubstituted N-termini provided that the penultimate residue is proline. The sequence is that of Xaa-Pro dipeptidyl-peptidase from Streptococcus equi subsp. zooepidemicus (strain H70).